Here is an 828-residue protein sequence, read N- to C-terminus: MKLSRRSFMKANAVAAAAAAAGLSVPGVARAVVGQQEAIKWDKAPCRFCGTGCGVLVGTQQGRVVACQGDPDAPVNRGLNCIKGYFLPKIMYGKDRLTQPMLRMKDGKYHKDGEFTPVSWDQAFDVMEEKFKTSLKEKGPEAIGMFGSGQWTIWEGYAAAKLFKAGFRSNNIDPNARHCMASAVVGFMRTFGMDEPMGCYDDIEQADAFVLWGSNMAEMHPILWSRITNRRLSDPNVKVAVLSTFQHRSFELADNGIVFTPQSDLMILNYIANYIIQHDAVNQDFFTKHVNLRKGATDIGYGLRPTHPLEKAAKNPGSDASGPMSFDEYKAFVAEYTLDKTAAMTGVPKDQLEQLAQLYADPNKRVISYWTMGFNQHTRGVWANNLVYNLHLLTGKISQPGCGPFSLTGQPSACGTAREVGTFSHRLPADMVVTNEKHRDICEKHWQIPAGTIPAKVGLHAVAQDRALKDGKLNVYWVMCNNNMQAGPNINEDRMPGWRDPRNFIIVSDPYPTVSALSADLILPTAMWVEKEGAYGNAERRTQFWRQQIKAPGEAKSDLWQLVQFSRRFKTEEVWPEALLAQKPELRGKTLYDVLFATPAVSKFPLSELKEDQLNDESRELGFYLQKGLFEEYAWFGRGHGHDLAPFDDYHNARGLRWPVVDGKETQWRYSEGNDPYVKAGEGYKFYGKPDGKAVIFALPFEPAAESPDNEYDLWLSTGRVLEHWHTGSMTRRVPELHRAFPEAVVFIHPLDAKARDLRRGDKVKVSSRRGEVISFVETRGRNRPPQGLVYMPFFDAAQLVNNLTLDATDPLSKETDFKKCAVKLAKV.

A signal peptide (tat-type signal) is located at residues 1–31; that stretch reads MKLSRRSFMKANAVAAAAAAAGLSVPGVARA. Residues 39 to 95 enclose the 4Fe-4S Mo/W bis-MGD-type domain; that stretch reads IKWDKAPCRFCGTGCGVLVGTQQGRVVACQGDPDAPVNRGLNCIKGYFLPKIMYGKD. 4 residues coordinate [4Fe-4S] cluster: Cys46, Cys49, Cys53, and Cys81. Mo-bis(molybdopterin guanine dinucleotide)-binding positions include Lys83, Gln150, Asn175, Cys179, 212–219, 243–247, 262–264, Met372, Gln376, Asn482, 508–509, Lys531, Asp558, and 718–727; these read WGSNMAEM, STFQH, QSD, SD, and TGRVLEHWHT. Phe794 lines the substrate pocket. Residues Asn802 and Lys819 each coordinate Mo-bis(molybdopterin guanine dinucleotide).

This sequence belongs to the prokaryotic molybdopterin-containing oxidoreductase family. NasA/NapA/NarB subfamily. In terms of assembly, component of the periplasmic nitrate reductase NapAB complex composed of NapA and NapB. The cofactor is [4Fe-4S] cluster. Mo-bis(molybdopterin guanine dinucleotide) serves as cofactor. Post-translationally, predicted to be exported by the Tat system. The position of the signal peptide cleavage has not been experimentally proven.

The protein localises to the periplasm. The enzyme catalyses 2 Fe(II)-[cytochrome] + nitrate + 2 H(+) = 2 Fe(III)-[cytochrome] + nitrite + H2O. Catalytic subunit of the periplasmic nitrate reductase complex NapAB. Receives electrons from NapB and catalyzes the reduction of nitrate to nitrite. In Salmonella arizonae (strain ATCC BAA-731 / CDC346-86 / RSK2980), this protein is Periplasmic nitrate reductase.